The primary structure comprises 445 residues: Inner membrane metabolite transport protein YgcS (445 aa).

Over 1-22 the chain is Cytoplasmic; sequence MNTSPVRMDDLPLNRFHCRIAA. The chain crosses the membrane as a helical span at residues 23–43; it reads LTFGAHLTDGYVLGVIGYAII. Residues 44-56 are Periplasmic-facing; the sequence is QLTPAMQLTPFMA. The chain crosses the membrane as a helical span at residues 57-77; sequence GMIGGSALLGLFLGSLVLGWI. At 78–85 the chain is on the cytoplasmic side; the sequence is SDHIGRQK. The helical transmembrane segment at 86 to 106 threads the bilayer; that stretch reads IFTFSFLLITLASFLQFFATT. The Periplasmic segment spans residues 107 to 114; that stretch reads PEHLIGLR. Residues 115–135 form a helical membrane-spanning segment; the sequence is ILIGIGLGGDYSVGHTLLAEF. The Cytoplasmic segment spans residues 136-142; that stretch reads SPRRHRG. The chain crosses the membrane as a helical span at residues 143-163; sequence ILLGAFSVVWTVGYVLASIAG. Over 164–175 the chain is Periplasmic; it reads HHFISENPEAWR. A helical transmembrane segment spans residues 176-196; the sequence is WLLASAALPALLITLLRWGTP. The Cytoplasmic segment spans residues 197–253; that stretch reads ESPRWLLRQGRFAEAHAIVHRYFGPHVLLGDEVVTATHKHIKTLFSSRYWRRTAFNS. A helical membrane pass occupies residues 254–274; the sequence is VFFVCLVIPWFVIYTWLPTIA. Over 275–286 the chain is Periplasmic; the sequence is QTIGLEDALTAS. Residues 287 to 307 form a helical membrane-spanning segment; it reads LMLNALLIVGALLGLVLTHLL. Residues 308-311 are Cytoplasmic-facing; the sequence is AHRK. Residues 312-332 form a helical membrane-spanning segment; that stretch reads FLLGSFLLLAATLVVMACLPS. Over 333 to 337 the chain is Periplasmic; that stretch reads GSSLT. A helical membrane pass occupies residues 338 to 358; it reads LLLFVLFSTTISAVSNLVGIL. Residues 359 to 369 lie on the Cytoplasmic side of the membrane; sequence PAESFPTDIRS. A helical transmembrane segment spans residues 370 to 390; sequence LGVGFATAMSRLGAAVSTGLL. Residues 391 to 400 are Periplasmic-facing; that stretch reads PWVLAQWGMQ. Residues 401–421 form a helical membrane-spanning segment; it reads VTLLLLATVLLVGFVVTWLWA. Over 422–445 the chain is Cytoplasmic; the sequence is PETKALPLVAAGNVGGANEHSVSV.

Belongs to the major facilitator superfamily. Sugar transporter (TC 2.A.1.1) family.

The protein resides in the cell inner membrane. The sequence is that of Inner membrane metabolite transport protein YgcS (ygcS) from Escherichia coli (strain K12).